Consider the following 313-residue polypeptide: Probable cell division protein WhiA (313 aa).

Residues Ser276–Lys309 constitute a DNA-binding region (H-T-H motif).

It belongs to the WhiA family.

Functionally, involved in cell division and chromosome segregation. In Ruminiclostridium cellulolyticum (strain ATCC 35319 / DSM 5812 / JCM 6584 / H10) (Clostridium cellulolyticum), this protein is Probable cell division protein WhiA.